The sequence spans 525 residues: Cytochrome P450 4V2 (525 aa).

Residues leucine 14 to phenylalanine 34 form a helical membrane-spanning segment. Glutamate 329 and cysteine 467 together coordinate heme.

Belongs to the cytochrome P450 family. Heme serves as cofactor.

The protein resides in the endoplasmic reticulum membrane. It carries out the reaction dodecanoate + reduced [NADPH--hemoprotein reductase] + O2 = 12-hydroxydodecanoate + oxidized [NADPH--hemoprotein reductase] + H2O + H(+). The enzyme catalyses tetradecanoate + reduced [NADPH--hemoprotein reductase] + O2 = 14-hydroxytetradecanoate + oxidized [NADPH--hemoprotein reductase] + H2O + H(+). It catalyses the reaction hexadecanoate + reduced [NADPH--hemoprotein reductase] + O2 = 16-hydroxyhexadecanoate + oxidized [NADPH--hemoprotein reductase] + H2O + H(+). The catalysed reaction is (5Z,8Z,11Z,14Z,17Z)-eicosapentaenoate + reduced [NADPH--hemoprotein reductase] + O2 = 20-hydroxy-(5Z,8Z,11Z,14Z,17Z)-eicosapentaenoate + oxidized [NADPH--hemoprotein reductase] + H2O + H(+). It carries out the reaction (4Z,7Z,10Z,13Z,16Z,19Z)-docosahexaenoate + reduced [NADPH--hemoprotein reductase] + O2 = 22-hydroxy-(4Z,7Z,10Z,13Z,16Z,19Z)-docosahexaenoate + oxidized [NADPH--hemoprotein reductase] + H2O + H(+). Its pathway is lipid metabolism; fatty acid metabolism. With respect to regulation, inhibited by N-hydroxy-N'-(4-n-butyl-2-methylphenyl formamidine)(HET0016) with an IC(50) of 38 nM. A cytochrome P450 monooxygenase involved in fatty acid metabolism in the eye. Catalyzes the omega-hydroxylation of polyunsaturated fatty acids (PUFAs) docosahexaenoate (DHA) and its precursor eicosapentaenoate (EPA), and may contribute to the homeostasis of these retinal PUFAs. Omega hydroxylates saturated fatty acids such as laurate, myristate and palmitate, the catalytic efficiency decreasing in the following order: myristate &gt; laurate &gt; palmitate (C14&gt;C12&gt;C16). Mechanistically, uses molecular oxygen inserting one oxygen atom into a substrate, and reducing the second into a water molecule, with two electrons provided by NADPH via cytochrome P450 reductase (CPR; NADPH-ferrihemoprotein reductase). The chain is Cytochrome P450 4V2 (Cyp4v2) from Mus musculus (Mouse).